Consider the following 271-residue polypeptide: Proteasome inhibitor PI31 subunit (271 aa).

Ala2 carries the N-acetylalanine modification. The interval Ala2–Asn150 is important for homodimerization and interaction with FBXO7. Residue Ser153 is modified to Phosphoserine. The residue at position 205 (Arg205) is an Omega-N-methylarginine. Arg219 is modified (asymmetric dimethylarginine). The interval Ile222–Leu271 is disordered. An Omega-N-methylarginine modification is found at Arg231. Residues Thr251 to Gly265 show a composition bias toward pro residues. Residue Ser252 is modified to Phosphoserine.

The protein belongs to the proteasome inhibitor PI31 family. Monomer and homodimer. Interacts with FBXO7.

Its subcellular location is the cytoplasm. It localises to the endoplasmic reticulum. Functionally, plays an important role in control of proteasome function. Inhibits the hydrolysis of protein and peptide substrates by the 20S proteasome. Also inhibits the activation of the proteasome by the proteasome regulatory proteins PA700 and PA28. This Pongo abelii (Sumatran orangutan) protein is Proteasome inhibitor PI31 subunit (PSMF1).